Consider the following 216-residue polypeptide: Thylakoid lumenal 16.5 kDa protein, chloroplastic (216 aa).

The N-terminal 38 residues, 1-38 (MAKSLLCSSTLNPFFSTTLSSSKKNQIAYSGNSKNQTS), are a transit peptide targeting the chloroplast. A thylakoid-targeting transit peptide spans 39-73 (SSLLWKRRELSLGFMSSLVAIGLVSNDRRRHDANA).

The protein resides in the plastid. It localises to the chloroplast thylakoid lumen. In Arabidopsis thaliana (Mouse-ear cress), this protein is Thylakoid lumenal 16.5 kDa protein, chloroplastic.